A 159-amino-acid chain; its full sequence is D-aminoacyl-tRNA deacylase (159 aa).

The Gly-cisPro motif, important for rejection of L-amino acids signature appears at 146–147; that stretch reads GP.

It belongs to the DTD family. As to quaternary structure, homodimer.

Its subcellular location is the cytoplasm. The enzyme catalyses glycyl-tRNA(Ala) + H2O = tRNA(Ala) + glycine + H(+). It carries out the reaction a D-aminoacyl-tRNA + H2O = a tRNA + a D-alpha-amino acid + H(+). In terms of biological role, an aminoacyl-tRNA editing enzyme that deacylates mischarged D-aminoacyl-tRNAs. Also deacylates mischarged glycyl-tRNA(Ala), protecting cells against glycine mischarging by AlaRS. Acts via tRNA-based rather than protein-based catalysis; rejects L-amino acids rather than detecting D-amino acids in the active site. By recycling D-aminoacyl-tRNA to D-amino acids and free tRNA molecules, this enzyme counteracts the toxicity associated with the formation of D-aminoacyl-tRNA entities in vivo and helps enforce protein L-homochirality. The protein is D-aminoacyl-tRNA deacylase of Bifidobacterium animalis subsp. lactis (strain AD011).